Reading from the N-terminus, the 90-residue chain is Acyl-CoA-binding protein homolog (90 aa).

Residues Leu3–Leu89 form the ACB domain. Residues Arg15, Tyr30–Lys34, Lys53, Lys57, and Tyr76 contribute to the an acyl-CoA site.

This sequence belongs to the ACBP family.

Binds medium- and long-chain acyl-CoA esters with very high affinity and may function as an intracellular carrier of acyl-CoA esters. The polypeptide is Acyl-CoA-binding protein homolog (Manduca sexta (Tobacco hawkmoth)).